We begin with the raw amino-acid sequence, 246 residues long: Probable ABC transporter permease protein BMEII0107 (246 aa).

6 helical membrane-spanning segments follow: residues 12–32 (LLSFAVGIGGWYLLTATGAVV), 63–83 (VLSGFVLGVALAIPVGFLMGW), 94–114 (WVQFFRMIPPLAVIPLAIVTL), 122–142 (IFVIFLASFLSSVVATYQGVI), 172–192 (VPFILVGVRIGLGSAWATVVA), and 211–231 (LYYDLPTIFVSLVTIGILGLF). Positions 56-236 (IFASLRRVLS…ILGLFMDRLL (181 aa)) constitute an ABC transmembrane type-1 domain.

This sequence belongs to the binding-protein-dependent transport system permease family. In terms of assembly, the complex is composed of two ATP-binding proteins (BMEII0108), two transmembrane proteins (BMEII0107) and a solute-binding protein (BMEII0109).

It localises to the cell inner membrane. Functionally, probably part of an ABC transporter complex. Probably responsible for the translocation of the substrate across the membrane. This is Probable ABC transporter permease protein BMEII0107 from Brucella melitensis biotype 1 (strain ATCC 23456 / CCUG 17765 / NCTC 10094 / 16M).